Here is a 97-residue protein sequence, read N- to C-terminus: Co-chaperonin GroES (97 aa).

This sequence belongs to the GroES chaperonin family. As to quaternary structure, heptamer of 7 subunits arranged in a ring. Interacts with the chaperonin GroEL.

The protein resides in the cytoplasm. Its function is as follows. Together with the chaperonin GroEL, plays an essential role in assisting protein folding. The GroEL-GroES system forms a nano-cage that allows encapsulation of the non-native substrate proteins and provides a physical environment optimized to promote and accelerate protein folding. GroES binds to the apical surface of the GroEL ring, thereby capping the opening of the GroEL channel. This chain is Co-chaperonin GroES, found in Klebsiella pneumoniae subsp. pneumoniae (strain ATCC 700721 / MGH 78578).